Here is a 110-residue protein sequence, read N- to C-terminus: Nucleotide-binding protein in fmt 3'region (110 aa).

Position 8–15 (8–15 (GLSGAGKT)) interacts with ATP. Position 57 to 60 (57 to 60 (DARA)) interacts with GTP.

Belongs to the RapZ-like family.

Displays ATPase and GTPase activities. The chain is Nucleotide-binding protein in fmt 3'region from Thermus thermophilus.